The primary structure comprises 714 residues: Polyribonucleotide nucleotidyltransferase (714 aa).

Aspartate 490 and aspartate 496 together coordinate Mg(2+). Positions 556–615 constitute a KH domain; the sequence is PRIETMQIPTDKIREVIGSGGKVIREIVEVSGAKVDINDDGIIKIASPNGDSIKKAYDMI. One can recognise an S1 motif domain in the interval 625 to 693; the sequence is GQVYTGKVVK…DRGKVRLSMK (69 aa).

Belongs to the polyribonucleotide nucleotidyltransferase family. It depends on Mg(2+) as a cofactor.

The protein localises to the cytoplasm. The enzyme catalyses RNA(n+1) + phosphate = RNA(n) + a ribonucleoside 5'-diphosphate. In terms of biological role, involved in mRNA degradation. Catalyzes the phosphorolysis of single-stranded polyribonucleotides processively in the 3'- to 5'-direction. In Ruegeria pomeroyi (strain ATCC 700808 / DSM 15171 / DSS-3) (Silicibacter pomeroyi), this protein is Polyribonucleotide nucleotidyltransferase.